Reading from the N-terminus, the 1665-residue chain is Cortactin-binding protein 2 (1665 aa).

The stretch at 120–277 forms a coiled coil; that stretch reads RKMQERMSTQ…EQLKRGNDSK (158 aa). Disordered stretches follow at residues 203-222, 368-480, and 500-620; these read EKKK…RRST, VSSV…SPTS, and RFTS…PSID. 2 stretches are compositionally biased toward polar residues: residues 388–399 and 410–429; these read SIGSTPDLASST and TGQT…SMHS. A compositionally biased stretch (low complexity) spans 455 to 469; sequence QGNANDQDQNGNTTQ. A compositionally biased stretch (polar residues) spans 470–480; the sequence is SPPSRDVSPTS. The residue at position 500 (Arg-500) is an Asymmetric dimethylarginine. ANK repeat units lie at residues 711–741, 745–774, 778–807, 811–840, and 844–873; these read GRPT…DINY, DGHS…QIDA, NGFT…NIDH, GGQT…DRSV, and DGWT…PTLG. The segment at 875-902 is disordered; sequence SLNEEEPEPGAFDLDQGQEGSEGTAKPV. An ANK 6 repeat occupies 914 to 944; the sequence is EGWTAAHIAASKGFKNCLEILCRHGGLEPER. Positions 1447–1495 are disordered; that stretch reads CSKKKGENGAWRKVSTNPRKKSGRFSSPTWSKPDLGEEGTKNKTMSQPN. Phosphoserine is present on Ser-1526. Residues 1575–1665 form a disordered region; sequence NNLRMPVSQK…KNEQVQKPNK (91 aa). Composition is skewed to low complexity over residues 1590–1604 and 1623–1641; these read SSHQ…TSKT and SQCS…TRQT. Positions 1656–1665 are enriched in polar residues; it reads KNEQVQKPNK.

Interacts with CTTN/cortactin SH3 domain. Interacts with STRN, STRN4/zinedin and MOB4/phocein; this interactions mediate the association with the STRIPAK core complex and may regulate dendritic spine distribution of the STRIPAK complex in hippocampal neurons. Activation of glutamate receptors weakens the interaction with STRN and STRN4.

It localises to the cytoplasm. Its subcellular location is the cell cortex. The protein localises to the cell projection. It is found in the dendritic spine. Its function is as follows. Regulates the dendritic spine distribution of CTTN/cortactin in hippocampal neurons, and thus controls dendritic spinogenesis and dendritic spine maintenance. Associates with the striatin-interacting phosphatase and kinase (STRIPAK) core complex to regulate dendritic spine distribution of the STRIPAK complex in hippocampal neurons. The sequence is that of Cortactin-binding protein 2 (CTTNBP2) from Dasypus novemcinctus (Nine-banded armadillo).